The primary structure comprises 313 residues: 4-hydroxyproline 2-epimerase (313 aa).

Residues Met-1–Leu-23 are disordered. Catalysis depends on Cys-85, which acts as the Proton acceptor. Substrate-binding positions include Gly-86 to His-87, His-205, and Asp-231. The active-site Proton donor is the Cys-235. Residue Gly-236–Thr-237 participates in substrate binding.

It belongs to the proline racemase family.

The catalysed reaction is trans-4-hydroxy-L-proline = cis-4-hydroxy-D-proline. Its function is as follows. Catalyzes the epimerization of trans-4-hydroxy-L-proline (t4LHyp) to cis-4-hydroxy-D-proline (c4DHyp). Is likely involved in a degradation pathway that converts t4LHyp to alpha-ketoglutarate. Displays no proline racemase activity. This chain is 4-hydroxyproline 2-epimerase, found in Ruegeria pomeroyi (strain ATCC 700808 / DSM 15171 / DSS-3) (Silicibacter pomeroyi).